A 407-amino-acid polypeptide reads, in one-letter code: MKKIALIIGSMIAGGIISAAGFTWFAKAEPPAEKTSTAERKILFWYDPMYPNTRFDKPGKSPFMDMDLVPKYADEESSASGVRIDPTQTQNLGVKTATVTRGPLTFAQSFPANVSYNEYQYAIVQARAAGFIDKVYPLTVGDKVQKGAPLLDLTIPDWVEAQSEYLLLRETGGTATQTEGILERLRLAGMPEADIRRLIATQKIQTRFTLKAPIDGVITAFDLRAGMNIAKDNVVAKIQGMDPVWVTAAIPESIAWLVKDASQFTLTVPARPDKTLTIRKWTLLPGVDAATRTLQLRLEVDNADEALKPGMNAWLKLNTASEPMLLIPSQALIDTGSEQRVITVDADGRFVPKRVAVFQASQGVTALRSGLAEGEKVVSSGLFLIDSEANISGALERMRSESATHAH.

Positions M1 to A28 are cleaved as a signal peptide.

Belongs to the membrane fusion protein (MFP) (TC 8.A.1) family. As to quaternary structure, the cus efflux system is composed of CusA, CusB, CusC and CusF.

Its function is as follows. Part of a cation efflux system that mediates resistance to copper and silver. The protein is Cation efflux system protein CusB (cusB) of Escherichia coli O157:H7.